The primary structure comprises 633 residues: MIQIFLRVKKAQPSSDASNKYGFLTVLNDYEILLESPEDSHAYRVSKSKTLEKASFTKVFPPSCTQLDVFSTICAPLIADSLVNMNDTLLFTLGVSGAGKTYTLFGPSDRPGVAFLALDALFYAIKGREASPQTVEFLRSQLEKCKIVEASKFLRGEAPLDIKVPNTEYYASHFPKIEEKNYQYAIYLSFAEIYNDRIFDLLEKASFFGHRHALSLKKSSTSDKKSIAGIQKVFVSNTTEAYKLIQKVLQLRKSTSTKSNSVSSRSHLIMSIELFKVCTKSNKFESCQIDLVDLAGSERTRSAETSGLLLREGASINRSLLTLGQCLEALRRKHEGKQHIIPFRQSKLTELLFHSGHLSGLAGINMLVNIDPFGSFDENAQVMRYSANAREILPPPLNENSGSQSPSHSLLQKSKNTSSTKALTSHLEQLQQENQQLRMLLADADSEMMNLEYEIRQQMTREMEERVSEVERTFLTKLLEESAQGIEYTDQKLEKMGGWMKKLQDENSEKTETIAQLEQIIEELHEELRSLEEESIKESSATQQNENQHKRSSRKLLYEDKQAIQEAHTINTKRKLWPQSTLIQAPNSDDEENVPSPSPKKKVVSPIKPLSPSRRPPLTSLYSGTTDIDINEL.

In terms of domain architecture, Kinesin motor spans 1–392 (MIQIFLRVKK…MRYSANAREI (392 aa)). Residue 94–101 (GVSGAGKT) coordinates ATP. 3 disordered regions span residues 393–423 (LPPP…TKAL), 531–556 (LEEE…SRKL), and 575–633 (KLWP…INEL). A compositionally biased stretch (polar residues) spans 398 to 423 (NENSGSQSPSHSLLQKSKNTSSTKAL). Residues 417–541 (TSSTKALTSH…EEESIKESSA (125 aa)) adopt a coiled-coil conformation. Positions 578–587 (PQSTLIQAPN) are enriched in polar residues. Residues 604–623 (VSPIKPLSPSRRPPLTSLYS) are compositionally biased toward low complexity. 3 positions are modified to phosphoserine: serine 605, serine 611, and serine 613. Positions 624–633 (GTTDIDINEL) are enriched in polar residues.

It belongs to the TRAFAC class myosin-kinesin ATPase superfamily. Kinesin family. As to quaternary structure, interacts with ase1. Post-translationally, phosphorylated by cdc2 and dephosphorylated by clp1. Dephosphorylation is required for the interaction with ase1.

It is found in the nucleus. It localises to the cytoplasm. Its subcellular location is the cytoskeleton. The protein resides in the microtubule organizing center. The protein localises to the spindle pole body. In terms of biological role, kinesin-like motor protein involved in anaphase B spindle elongation. The polypeptide is Kinesin-like motor protein 9 (klp9) (Schizosaccharomyces pombe (strain 972 / ATCC 24843) (Fission yeast)).